The sequence spans 650 residues: Histone-lysine N-methyltransferase family member SUVH9 (650 aa).

Disordered stretches follow at residues 1-24 (MGSSHIPLDPSLNPSPSLIPKLEP) and 95-129 (PVEENPEPEPNPYSTSDSSPSVATQRPRPQPRSSE). Over residues 7-20 (PLDPSLNPSPSLIP) the composition is skewed to low complexity. Residues 107–118 (YSTSDSSPSVAT) show a composition bias toward polar residues. A YDG domain is found at 205 to 352 (GSIPGVQVGD…FGVFKYRLER (148 aa)). Residues 432-490 (SGCDCVNGCGSGCLCEAKNSGEIAYDYNGTLIRQKPLIHECGSACQCPPSCRNRVTQKG) enclose the Pre-SET domain. Zn(2+) contacts are provided by cysteine 434, cysteine 436, cysteine 440, cysteine 444, cysteine 446, cysteine 472, cysteine 476, cysteine 478, and cysteine 482. An SET domain is found at 493 to 637 (NRLEVFRSLE…PMTELSLDYG (145 aa)).

The protein belongs to the class V-like SAM-binding methyltransferase superfamily. Histone-lysine methyltransferase family. Suvar3-9 subfamily. Component of an RNA-directed DNA methylation (RdDM) complex that contains at least MORC6, MORC1/CRT1, MORC2, SWI3D and SUVH9. Interacts directly with MORC6, MORC2 and MORC1/CRT1. Interacts with SWI3B, SWI3C and SWI3D.

It is found in the nucleus. The protein localises to the chromosome. Its subcellular location is the centromere. Its function is as follows. Histone methyltransferase family member that plays a role in gene silencing. Together with MORC6 and SUVH2, regulates the silencing of some transposable elements (TEs). According to PubMed:19043555, the protein does not bind S-adenosyl-L-methionine and lacks methyltransferase activity. Instead, it may function downstream of DRM2 in RNA-directed DNA methylation, binding to methylated DNA and recruiting DNA-directed RNA polymerase V to chromatin. This is Histone-lysine N-methyltransferase family member SUVH9 (SUVH9) from Arabidopsis thaliana (Mouse-ear cress).